The following is a 340-amino-acid chain: Ava biosynthesis cluster protein G (340 aa).

Helical transmembrane passes span 15 to 35, 81 to 101, 118 to 138, and 148 to 168; these read WSAF…NIWN, FMIS…LQFV, AFFV…VHAF, and LSIM…FLCI. N-linked (GlcNAc...) asparagine glycosylation occurs at Asn171. The next 2 helical transmembrane spans lie at 219 to 239 and 315 to 335; these read FSSV…YVAF and SALT…WLQI.

It localises to the membrane. The protein operates within secondary metabolite biosynthesis. Part of the cluster that mediates the biosynthesis of a highly modified cyclo-arginine-tryptophan dipeptide (cRW). The first step of the pathway is perfornmed by the arginine-containing cyclodipeptide synthase (RCPDS) avaA that acts as the scaffold-generating enzyme and is responsible for formation of the cyclo-Arg-Trp (cRW) diketopiperazine. AvaB then acts as a multifunctional flavoenzyme that is responsible for generating the cyclo-Arg-formylkynurenine DKP, which can be deformylated by avaC. AvaB then further catalyzes an additional N-oxidation followed by cyclization and dehydration. The next step is an N-acetylation of the guanidine group catalyzed by the arginine N-acetyltransferase avaD. The roles of the additional enzymes identified within the ava cluster still have to be determined. The sequence is that of Ava biosynthesis cluster protein G from Aspergillus versicolor.